Reading from the N-terminus, the 2324-residue chain is Myomegalin (2324 aa).

Coiled coils occupy residues 41 to 132, 158 to 205, 238 to 288, and 348 to 638; these read REDV…LVEA, QVKL…LLEE, DSHL…SLKE, and LFCS…NKQA. 2 disordered regions span residues 72-96 and 205-240; these read TWADEEDLNSQNEAELRRQVEEPQQ and EPGGMEVQPMPKGLPTQQKPDLNETPTTQPSVSDSH. The span at 85 to 96 shows a compositional bias: basic and acidic residues; sequence AELRRQVEEPQQ. The span at 219–238 shows a compositional bias: polar residues; the sequence is PTQQKPDLNETPTTQPSVSD. The interval 701–747 is disordered; sequence PAGATSVGPHHGEQTDQGSTQMPSRDDSTSLTAREEASIPRSTLGDS. Threonine 705 is modified (phosphothreonine). Positions 724 to 738 are enriched in basic and acidic residues; the sequence is SRDDSTSLTAREEAS. Coiled coils occupy residues 745–822, 855–923, and 1011–1043; these read GDSD…QLVD, ENRR…EEVL, and LRAEIHQPLEEKRKAEAELKELKAQIEEAGFSS. Disordered regions lie at residues 1155–1182 and 1195–1216; these read LPSSEKHQHQEQENMTARPGPRPQSLKL and NKSQAQDSGHQPEFSLPGSTKH. 3 coiled-coil regions span residues 1213–1241, 1346–1384, and 1430–1455; these read STKHLRSQLAQCRQRYQDLQEKLLISEAT, TSDDSSLLRKDIRDLKAQLQNAYKVIQNLRSRVRSLSAT, and GLQAKKNLENLIQRVSQLEAQLPKTG. Disordered regions lie at residues 1540–1559, 1589–1610, 1628–1685, 1742–1773, 1857–1877, and 2081–2140; these read TDRLTSKFSTKDHKSEKEEA, RFSSPPSSHAASDSHRSASSTS, YTHY…IPKP, APPTSTSTLLSNHTEASSPRYSNPAQPHSPAR, LSSTARENGSTSHFYSQGLES, and NQQP…TPPK. The 92-residue stretch at 1550-1641 folds into the Olduvai domain; that stretch reads KDHKSEKEEA…EEKKPSPSNS (92 aa). 2 stretches are compositionally biased toward low complexity: residues 1591–1610 and 1637–1646; these read SSPPSSHAASDSHRSASSTS and SPSNSAASAS. Over residues 1743–1767 the composition is skewed to polar residues; that stretch reads PPTSTSTLLSNHTEASSPRYSNPAQ. A coiled-coil region spans residues 1821 to 2056; the sequence is GADLLEEHLG…LRLQLEQQMD (236 aa). Polar residues-rich tracts occupy residues 2081–2090 and 2108–2135; these read NQQPPFQGSA and PSNSCSVPGSDSAIISRTNNGSDESAAT. Residues 2248–2274 adopt a coiled-coil conformation; the sequence is EEGNLMEKELLDLRAQVSQQQQLLQST.

Interacts with PDE4D. May interact with MAPRE1 and MAPRE3. May form a pericentrosomal complex with AKAP9, CDK5RAP2 and EB1/MAPRE1 in an isoform-specific manner; within this complex, may mediate MAPRE1-binding to CDK5RAP2. Interaction with AKAP9 stabilizes both proteins. May interact with CAMSAP2 in an isoform-specific manner; this interaction is much stronger in the presence of AKAP9. In complex with AKAP9, recruits CAMSAP2 to the Golgi apparatus. May interact with unglycosylated LGALS3BP in an isoform-specific manner; this interaction may connect the pericentrosomal complex to the gamma-tubulin ring complex (gamma-TuRC) to promote microtubule assembly and acetylation. In terms of tissue distribution, abundantly expressed in heart and skeletal muscle and to a lower extent in brain, lung and liver. Expressed in heart, skeletal muscle and testis (at protein level).

The protein localises to the cytoplasm. It is found in the cytoskeleton. Its subcellular location is the microtubule organizing center. The protein resides in the centrosome. It localises to the golgi apparatus. Its function is as follows. Functions as an anchor sequestering components of the cAMP-dependent pathway to Golgi and/or centrosomes. May participate in microtubule dynamics, promoting microtubule assembly, in an isoform-specific manner. Depending upon the cell context, may act at the level of the Golgi apparatus or that of the centrosome. In complex with AKAP9, recruits CAMSAP2 to the Golgi apparatus and tethers non-centrosomal minus-end microtubules to the Golgi, an important step for polarized cell movement. In complex with AKAP9, EB1/MAPRE1 and CDK5RAP2, contributes to microtubules nucleation and extension from the centrosome to the cell periphery, a crucial process for directed cell migration, mitotic spindle orientation and cell-cycle progression. In Rattus norvegicus (Rat), this protein is Myomegalin (Pde4dip).